Reading from the N-terminus, the 158-residue chain is Trafficking protein particle complex subunit 6B (158 aa).

Belongs to the TRAPP small subunits family. BET3 subfamily. Homodimer. Part of a TRAPP complex. Heterodimer with TRAPPC3. The heterodimer TRAPPC6B-TRAPPC3 interacts with TRAPPC1 likely providing a core for TRAPP complex formation. Widely expressed. Expressed in lung, heart, liver, spleen, brain and kidney.

It is found in the golgi apparatus. It localises to the cis-Golgi network. Its subcellular location is the endoplasmic reticulum. Its function is as follows. Component of a transport protein particle (TRAPP) complex that may function in specific stages of inter-organelle traffic. Specifically involved in the early development of neural circuitry, likely by controlling the frequency and amplitude of intracellular calcium transients implicated in the regulation of neuron differentiation and survival. The polypeptide is Trafficking protein particle complex subunit 6B (Mus musculus (Mouse)).